The chain runs to 514 residues: 2,3-bisphosphoglycerate-independent phosphoglycerate mutase (514 aa).

Mn(2+)-binding residues include aspartate 14 and serine 64. The active-site Phosphoserine intermediate is the serine 64. Residues histidine 125, arginine 155–aspartate 156, arginine 187, arginine 193, arginine 263–arginine 266, and lysine 336 each bind substrate. Mn(2+) is bound by residues aspartate 403, histidine 407, aspartate 444, histidine 445, and histidine 463.

This sequence belongs to the BPG-independent phosphoglycerate mutase family. Monomer. Mn(2+) is required as a cofactor.

The catalysed reaction is (2R)-2-phosphoglycerate = (2R)-3-phosphoglycerate. It participates in carbohydrate degradation; glycolysis; pyruvate from D-glyceraldehyde 3-phosphate: step 3/5. Insensitive to vanadate. Its function is as follows. Catalyzes the interconversion of 2-phosphoglycerate (2-PGA) and 3-phosphoglycerate (3-PGA). This chain is 2,3-bisphosphoglycerate-independent phosphoglycerate mutase, found in Escherichia coli (strain K12).